The following is a 182-amino-acid chain: Spermatophorin SP23 (182 aa).

The first 7 residues, 1-7, serve as a signal peptide directing secretion; it reads MVASIAG. Disordered regions lie at residues 1-26, 56-79, and 104-136; these read MVAS…FQPY, FQTI…NSIE, and IVVN…PPTI. Positions 109–128 are enriched in pro residues; the sequence is APPPPPVIYQAPPPPPPPPI.

In terms of tissue distribution, spermatophore.

The protein localises to the secreted. Functionally, structural protein of a layer within the wall of the spermatophore produced probably by cell type 4 of the bean-shaped gland (BAG). Fixation in the spermatophore seems to require covalent cross-linking of spermatophorins. The chain is Spermatophorin SP23 (SP23) from Tenebrio molitor (Yellow mealworm beetle).